Here is a 432-residue protein sequence, read N- to C-terminus: 5'-deoxyadenosine deaminase (432 aa).

The Zn(2+) site is built by His-63 and His-65. Positions 92 and 184 each coordinate substrate. Position 211 (His-211) interacts with Zn(2+). Glu-214 and Asp-299 together coordinate substrate. Residue Asp-299 coordinates Zn(2+).

The protein belongs to the metallo-dependent hydrolases superfamily. MTA/SAH deaminase family. As to quaternary structure, homotetramer. Zn(2+) is required as a cofactor.

The enzyme catalyses 5'-deoxyadenosine + H2O + H(+) = 5'-deoxyinosine + NH4(+). The catalysed reaction is S-adenosyl-L-homocysteine + H2O + H(+) = S-inosyl-L-homocysteine + NH4(+). It carries out the reaction S-methyl-5'-thioadenosine + H2O + H(+) = S-methyl-5'-thioinosine + NH4(+). It catalyses the reaction adenosine + H2O + H(+) = inosine + NH4(+). Its pathway is amino-acid biosynthesis; S-adenosyl-L-methionine biosynthesis. Its function is as follows. Catalyzes the deamination of three SAM-derived enzymatic products, namely 5'-deoxyadenosine, S-adenosyl-L-homocysteine, and 5'-methylthioadenosine, to produce the inosine analogs. Can also deaminate adenosine. The preferred substrate for this enzyme is 5'-deoxyadenosine, but all these substrates are efficiently deaminated. Likely functions in a S-adenosyl-L-methionine (SAM) recycling pathway from S-adenosyl-L-homocysteine (SAH) produced from SAM-dependent methylation reactions. May also be involved in the recycling of 5'-deoxyadenosine, whereupon the 5'-deoxyribose moiety of 5'-deoxyinosine is further metabolized to deoxyhexoses used for the biosynthesis of aromatic amino acids in methanogens. In Methanosarcina barkeri (strain Fusaro / DSM 804), this protein is 5'-deoxyadenosine deaminase.